A 472-amino-acid polypeptide reads, in one-letter code: Homeobox protein PKNOX2 (472 aa).

Residues 1–62 (MMQHASPAPA…STPVPSAPID (62 aa)) form a disordered region. Residues 26–38 (DSPQMTATTQPPS) show a composition bias toward polar residues. Positions 46 to 56 (SAPSAAASTPV) are enriched in low complexity. The MEIS N-terminal domain occupies 96 to 179 (GSECITSASF…MHSDNLLRND (84 aa)). Residues 291 to 350 (KRGVLPKHATNIMRSWLFQHLMHPYPTEDEKRQIAAQTNLTLLQVNNWFVNARRRILQPM) constitute a DNA-binding region (homeobox). 3 disordered regions span residues 351–371 (LDASNPDPAPKAKKIKSQHRP), 386–405 (QQQGGAPGTNPDGSINLDNL), and 423–472 (AAHD…DSLV). A compositionally biased stretch (basic residues) spans 361-371 (KAKKIKSQHRP). Over residues 396–405 (PDGSINLDNL) the composition is skewed to polar residues. The segment covering 429-454 (LDGTEEEDEDEMEEEEEEELEEEVDE) has biased composition (acidic residues).

Belongs to the TALE/MEIS homeobox family.

Its subcellular location is the nucleus. The sequence is that of Homeobox protein PKNOX2 (PKNOX2) from Pongo abelii (Sumatran orangutan).